The primary structure comprises 338 residues: Lipoate-protein ligase A (338 aa).

A BPL/LPL catalytic domain is found at 29–216 (PADQRVLFLW…AYCEHYQQQV (188 aa)). ATP is bound by residues R71, 76-79 (GAVF), and K134. K134 is a binding site for (R)-lipoate.

Belongs to the LplA family. In terms of assembly, monomer.

It localises to the cytoplasm. The enzyme catalyses L-lysyl-[lipoyl-carrier protein] + (R)-lipoate + ATP = N(6)-[(R)-lipoyl]-L-lysyl-[lipoyl-carrier protein] + AMP + diphosphate + H(+). It participates in protein modification; protein lipoylation via exogenous pathway; protein N(6)-(lipoyl)lysine from lipoate: step 1/2. It functions in the pathway protein modification; protein lipoylation via exogenous pathway; protein N(6)-(lipoyl)lysine from lipoate: step 2/2. Functionally, catalyzes both the ATP-dependent activation of exogenously supplied lipoate to lipoyl-AMP and the transfer of the activated lipoyl onto the lipoyl domains of lipoate-dependent enzymes. In Vibrio cholerae serotype O1 (strain ATCC 39541 / Classical Ogawa 395 / O395), this protein is Lipoate-protein ligase A.